The sequence spans 216 residues: Hexitol phosphatase A (216 aa).

D9 acts as the Nucleophile in catalysis. 2 residues coordinate a divalent metal cation: D9 and D11. Residues 9–11, 106–107, and K138 each bind substrate; these read DLD and TS. D11 serves as the catalytic Proton donor. Residue D163 participates in a divalent metal cation binding.

It belongs to the HAD-like hydrolase superfamily. CbbY/CbbZ/Gph/YieH family. Mg(2+) is required as a cofactor. Mn(2+) serves as cofactor. The cofactor is Co(2+).

It carries out the reaction sugar phosphate + H2O = sugar + phosphate.. It catalyses the reaction D-mannitol 1-phosphate + H2O = D-mannitol + phosphate. The catalysed reaction is D-sorbitol 6-phosphate + H2O = D-sorbitol + phosphate. Its function is as follows. Sugar-phosphate phosphohydrolase that appears to contribute to butanol tolerance. Catalyzes the dephosphorylation of D-mannitol 1-phosphate and D-sorbitol 6-phosphate. Is also able to dephosphorylate other sugar phosphates in vitro including ribose-5-phosphate (Rib5P), 2-deoxyribose-5-phosphate, fructose-1-phosphate (Fru1P), fructose-6-phosphate (Fru6P), and glucose-6-phosphate (Glu6P). Selectively hydrolyzes beta-D-glucose-1-phosphate (bGlu1P) and has no activity with the alpha form. This chain is Hexitol phosphatase A, found in Escherichia coli (strain K12).